The primary structure comprises 446 residues: F-box/LRR-repeat protein At4g29420 (446 aa).

An F-box domain is found at Met-1–Tyr-51. LRR repeat units lie at residues Val-59–Val-84, Asp-103–Asp-130, Ser-135–Asn-160, Phe-181–Gly-206, Cys-223–Cys-248, His-265–Ser-289, Gln-318–Pro-343, and Asn-382–Ile-407.

The polypeptide is F-box/LRR-repeat protein At4g29420 (Arabidopsis thaliana (Mouse-ear cress)).